A 358-amino-acid polypeptide reads, in one-letter code: Isopentenyl-diphosphate delta-isomerase (358 aa).

12-13 lines the substrate pocket; the sequence is RK. FMN is bound by residues 69–71, Ser99, and Asn128; that span reads AMT. Gln158 serves as a coordination point for substrate. Residue Glu159 participates in Mg(2+) binding. Residues Lys190, Thr220, 267–269, and 288–289 each bind FMN; these read GIR and AG.

This sequence belongs to the IPP isomerase type 2 family. As to quaternary structure, homooctamer. Dimer of tetramers. The cofactor is FMN. It depends on NADPH as a cofactor. Mg(2+) is required as a cofactor.

Its subcellular location is the cytoplasm. The catalysed reaction is isopentenyl diphosphate = dimethylallyl diphosphate. Functionally, involved in the biosynthesis of isoprenoids. Catalyzes the 1,3-allylic rearrangement of the homoallylic substrate isopentenyl (IPP) to its allylic isomer, dimethylallyl diphosphate (DMAPP). This chain is Isopentenyl-diphosphate delta-isomerase, found in Listeria innocua serovar 6a (strain ATCC BAA-680 / CLIP 11262).